A 734-amino-acid polypeptide reads, in one-letter code: Polyribonucleotide nucleotidyltransferase (734 aa).

Mg(2+) contacts are provided by Asp505 and Asp511. The KH domain occupies 572-631 (PKLTTIQIPVDAIGMVIGKGGETIRSITEETGAEINIEDDGTVTIASASGEGASAALETI). Residues 641–715 (GTVYSGKVRD…GKTRFALSIK (75 aa)) enclose the S1 motif domain.

This sequence belongs to the polyribonucleotide nucleotidyltransferase family. Requires Mg(2+) as cofactor.

It is found in the cytoplasm. It catalyses the reaction RNA(n+1) + phosphate = RNA(n) + a ribonucleoside 5'-diphosphate. In terms of biological role, involved in mRNA degradation. Catalyzes the phosphorolysis of single-stranded polyribonucleotides processively in the 3'- to 5'-direction. In Prosthecochloris aestuarii (strain DSM 271 / SK 413), this protein is Polyribonucleotide nucleotidyltransferase.